A 121-amino-acid polypeptide reads, in one-letter code: Acidic phospholipase A2 SpII RP4 (121 aa).

Intrachain disulfides connect Cys25-Cys114, Cys27-Cys43, Cys42-Cys94, Cys48-Cys121, Cys49-Cys87, Cys56-Cys80, and Cys74-Cys85. Ca(2+)-binding residues include Tyr26, Gly28, and Gly30. His46 is an active-site residue. Asp47 lines the Ca(2+) pocket. Asp88 is an active-site residue.

The cofactor is Ca(2+). In terms of tissue distribution, expressed by the venom gland.

It is found in the secreted. The catalysed reaction is a 1,2-diacyl-sn-glycero-3-phosphocholine + H2O = a 1-acyl-sn-glycero-3-phosphocholine + a fatty acid + H(+). Snake venom phospholipase A2 (PLA2) which exhibits indirect hemolysis, induces mild edema inflammation in the foot pads of mice and slightly delays anticoagulant activities. In mice, not lethal, even at the highest dose, and exhibits low to moderate myotoxicity on muscular fibers. PLA2 catalyzes the calcium-dependent hydrolysis of the 2-acyl groups in 3-sn-phosphoglycerides. In Bothrops alternatus (Urutu), this protein is Acidic phospholipase A2 SpII RP4.